We begin with the raw amino-acid sequence, 640 residues long: Uromodulin (640 aa).

Residues 1 to 24 (MGQPSLTWMLMVVVASWFITTAAT) form the signal peptide. The EGF-like 1 domain maps to 28–64 (EARWCSECHSNATCTEDEAVTTCTCQEGFTGDGLTCV). 21 disulfide bridges follow: cysteine 32-cysteine 41, cysteine 35-cysteine 50, cysteine 52-cysteine 63, cysteine 69-cysteine 83, cysteine 77-cysteine 92, cysteine 94-cysteine 106, cysteine 112-cysteine 126, cysteine 120-cysteine 135, cysteine 137-cysteine 148, cysteine 150-cysteine 161, cysteine 155-cysteine 170, cysteine 174-cysteine 267, cysteine 195-cysteine 282, cysteine 217-cysteine 255, cysteine 223-cysteine 287, cysteine 248-cysteine 256, cysteine 297-cysteine 306, cysteine 300-cysteine 315, cysteine 317-cysteine 347, cysteine 335-cysteine 425, and cysteine 366-cysteine 389. The N-linked (GlcNAc...) asparagine glycan is linked to asparagine 38. In terms of domain architecture, EGF-like 2; calcium-binding spans 65 to 107 (DLDECAIPGAHNCSANSSCVNTPGSFSCVCPEGFRLSPGLGCT). 2 N-linked (GlcNAc...) asparagine glycosylation sites follow: asparagine 76 and asparagine 80. Positions 108-149 (DVDECAEPGLSHCHALATCVNVVGSYLCVCPAGYRGDGWHCE) constitute an EGF-like 3; calcium-binding domain. The beta hairpin stretch occupies residues 150 to 171 (CSPGSCGPGLDCVPEGDALVCA). The tract at residues 172–291 (DPCQAHRTLD…CHLAYCTDPS (120 aa)) is D10C. A glycan (N-linked (GlcNAc...) (complex) asparagine) is linked at asparagine 232. Residue asparagine 275 is glycosylated (N-linked (GlcNAc...) (high mannose) asparagine). In terms of domain architecture, EGF-like 4 spans 292 to 323 (SVEGTCEECSIDEDCKSNNGRWHCQCKQDFNI). Asparagine 322 carries an N-linked (GlcNAc...) (complex) asparagine glycan. Residues 334 to 429 (ECGANDMKVS…KINFACSYPL (96 aa)) are ZP-N. A ZP domain is found at 334–589 (ECGANDMKVS…PTCSGTRFRS (256 aa)). Asparagine 396 carries N-linked (GlcNAc...) (complex) asparagine glycosylation. A flexible ZP-N/ZP-C linker; important for secretion and polymerization into filaments region spans residues 430–453 (DMKVSLKTALQPMVSALNIRVGGT). An internal hydrophobic patch (IHP) region spans residues 454 to 465 (GMFTVRMALFQT). The ZP-C stretch occupies residues 454 to 589 (GMFTVRMALF…PTCSGTRFRS (136 aa)). 3 disulfide bridges follow: cysteine 506–cysteine 566, cysteine 527–cysteine 582, and cysteine 571–cysteine 578. N-linked (GlcNAc...) (complex) asparagine; alternate glycosylation is present at asparagine 513. Asparagine 513 carries an N-linked (GlcNAc...) (high mannose) asparagine; alternate glycan. Positions 586–589 (RFRS) are essential for cleavage by HPN. Positions 598-606 (VLNLGPITR) are external hydrophobic patch (EHP); regulates polymerization into filaments. Residue serine 614 is the site of GPI-anchor amidated serine attachment. Positions 615 to 640 (RAFSSLGLLKVWLPLLLSATLTLTFQ) are cleaved as a propeptide — removed in mature form.

Homodimer that then polymerizes into long filaments. The filaments can additionally assemble laterally to form a sheet. The filaments consist of a zigzag-shaped backbone with laterally protruding arms which interact with bacterial adhesin fimH. Two fimH molecules can bind to a single UMOD monomer. N-glycosylated. N-glycan heterogeneity at Asn-232: Hex7HexNAc6 (major) and dHex1Hex7HexNAc6 (minor); at Asn-322: dHex1Hex6HexNAc5 (minor), dHex1Hex7HexNAc6 (major) and dHex1Hex8HexNAc7 (minor); at Asn-396: Hex6HexNAc5 (major), dHex1Hex6HexNAc5 (minor) and Hex7HexNAc6 (minor). Glycosylated Asn-232 interacts with E.coli adhesin fimH. Other complex glycosylation sites may serve as binding sites for proteins from other bacteria inclduding K.pneumoniae, P.aeruginosa and S.mitis. In terms of processing, proteolytically cleaved at a conserved C-terminal proteolytic cleavage site to generate the secreted form found in urine. This cleavage is catalyzed by HPN. Expressed in the tubular cells of the kidney. Most abundant protein in normal urine (at protein level). Synthesized exclusively in the kidney. Expressed exclusively by epithelial cells of the thick ascending limb of Henle's loop (TALH) and of distal convoluted tubule lumen.

The protein resides in the apical cell membrane. The protein localises to the basolateral cell membrane. It localises to the cell projection. Its subcellular location is the cilium membrane. It is found in the secreted. Its function is as follows. Functions in biogenesis and organization of the apical membrane of epithelial cells of the thick ascending limb of Henle's loop (TALH), where it promotes formation of complex filamentous gel-like structure that may play a role in the water barrier permeability. May serve as a receptor for binding and endocytosis of cytokines (IL-1, IL-2) and TNF. Facilitates neutrophil migration across renal epithelia. Functionally, in the urine, may contribute to colloid osmotic pressure, retards passage of positively charged electrolytes, and inhibits formation of liquid containing supersaturated salts and subsequent formation of salt crystals. Protects against urinary tract infections by binding to type 1 fimbriated E.coli. Binds to bacterial adhesin fimH which mediates the stable formation of bacterial aggregates, prevents the binding of E.coli to uroplakins UPK1A and UPK1B which act as urothelial receptors for type I fimbriae, and allows for pathogen clearance through micturation. Also promotes aggregation of other bacteria including K.pneumoniae, P.aeruginosa and S.mitis and so may also protect against other uropathogens. This chain is Uromodulin (UMOD), found in Homo sapiens (Human).